Here is a 353-residue protein sequence, read N- to C-terminus: D-alanine--D-alanine ligase (353 aa).

The ATP-grasp domain occupies 141 to 349 (KAAFAAAGLP…LEELVSQLVI (209 aa)). 176–231 (EAKLKYPCFVKPANLGSSVGISKAQNRNELLIGLDKAASLDRRIVVEQGVSARELE) contacts ATP. 3 residues coordinate Mg(2+): D302, E316, and N318.

Belongs to the D-alanine--D-alanine ligase family. It depends on Mg(2+) as a cofactor. Mn(2+) serves as cofactor.

It localises to the cytoplasm. It carries out the reaction 2 D-alanine + ATP = D-alanyl-D-alanine + ADP + phosphate + H(+). Its pathway is cell wall biogenesis; peptidoglycan biosynthesis. In terms of biological role, cell wall formation. In Prochlorococcus marinus (strain MIT 9303), this protein is D-alanine--D-alanine ligase.